The following is a 226-amino-acid chain: Transmembrane emp24 domain-containing protein 5 (226 aa).

A signal peptide spans 1–24; the sequence is MGDKTWLPFPVVLLAALLLPRAAG. At 25 to 193 the chain is on the lumenal side; sequence FTPSLDSDFT…IQESNFDRVN (169 aa). Residues 42–123 enclose the GOLD domain; the sequence is KECFYQPMPL…EKVIFFELIL (82 aa). A helical transmembrane segment spans residues 194–214; that stretch reads FWSMVNLVVMVVVSAIQVYML. Residues 215 to 226 are Cytoplasmic-facing; it reads KSLFEDKRKSRT. A Mediates export from ER motif is present at residues 217–218; sequence LF.

This sequence belongs to the EMP24/GP25L family. As to quaternary structure, interacts with TMED9 and TMED10.

It is found in the endoplasmic reticulum membrane. Its subcellular location is the golgi apparatus. It localises to the cis-Golgi network membrane. The protein resides in the endoplasmic reticulum-Golgi intermediate compartment membrane. In terms of biological role, potential role in vesicular protein trafficking, mainly in the early secretory pathway. Required for the maintenance of the Golgi apparatus; involved in protein exchange between Golgi stacks during assembly. Probably not required for COPI-vesicle-mediated retrograde transport. This chain is Transmembrane emp24 domain-containing protein 5 (TMED5), found in Bos taurus (Bovine).